Here is a 248-residue protein sequence, read N- to C-terminus: Pulmonary surfactant-associated protein A (248 aa).

The signal sequence occupies residues methionine 1–cysteine 20. A Collagen-like domain is found at glycine 31 to proline 100. Positions proline 33–proline 100 are disordered. Basic and acidic residues predominate over residues proline 42 to lysine 51. Over residues proline 54–aspartate 65 the composition is skewed to pro residues. In terms of domain architecture, C-type lectin spans isoleucine 134–glutamate 247. 2 cysteine pairs are disulfide-bonded: cysteine 155–cysteine 246 and cysteine 224–cysteine 238. Asparagine 207 carries N-linked (GlcNAc...) asparagine glycosylation. Residues glutamate 215, alanine 217, asparagine 234, and aspartate 235 each coordinate Ca(2+).

This sequence belongs to the SFTPA family. As to quaternary structure, oligomeric complex of 6 set of homotrimers.

The protein resides in the secreted. Its subcellular location is the extracellular space. It localises to the extracellular matrix. It is found in the surface film. In terms of biological role, in presence of calcium ions, it binds to surfactant phospholipids and contributes to lower the surface tension at the air-liquid interface in the alveoli of the mammalian lung and is essential for normal respiration. Enhances the expression of MYO18A/SP-R210 on alveolar macrophages. This chain is Pulmonary surfactant-associated protein A (SFTPA1), found in Macaca mulatta (Rhesus macaque).